The primary structure comprises 707 residues: F-box/WD repeat-containing protein 7 (707 aa).

The tract at residues 1 to 151 (MNQELLSVGS…SVTNSSSIVD (151 aa)) is disordered. Phosphoserine; by ATM is present on Ser26. Residues 57–68 (GEVVGVEPRPGG) are compositionally biased toward low complexity. Polar residues predominate over residues 69–84 (QNDSQQGQLEENNNRF). The span at 87-129 (VDEDSSGNQEEQEEDEEHAGEQDEEDEEEEEMDQESDDFDQSD) shows a compositional bias: acidic residues. Residues 130–139 (DSSREDEHTH) show a composition bias toward basic and acidic residues. Thr205 carries the phosphothreonine modification. At Ser227 the chain carries Phosphoserine; by SGK1. In terms of domain architecture, F-box spans 278 to 324 (RDFISLLPKELALYVLSFLEPKDLLQAAQTCRYWRILAEDNLLWREK). WD repeat units follow at residues 378–418 (GHDD…RTLV), 420–456 (HTGG…CIHT), 459–498 (GHTS…HVLM), 500–536 (HVAA…CLHT), 539–578 (GHTN…HTLT), 580–618 (HQSL…QTLQ), and 622–659 (KHQS…FIRN).

Homodimer; homodimerization plays a role in substrate binding and/or ubiquitination and degradation. Component of the SCF(FBXW7) complex consisting of CUL1, RBX1, SKP1 and FBXW7. Interacts (via F-box domain) with SKP1. Interacts (via F-box domain) with pseudophosphatase STYX; the interaction is direct and prevents FBXW7 interaction with SKP1. Interacts with cyclin-E (CCNE1 or CCNE2). Interacts with PSEN1. Forms a trimeric complex with NOTCH1 and SGK1. Interacts with NOTCH1 intracellular domain/NICD and NOTCH4 intracellular domain/NICD. Interacts with NOTCH2 intracellular domain (N2ICD). Interacts with MYC (when phosphorylated). Interacts with USP28, counteracting ubiquitination of MYC. Interacts with JUN. Found in a complex with JUN and PRR7. Interacts with JUN and PRR7; the interaction inhibits ubiquitination-mediated JUN degradation, promoting its phosphorylation and transcriptional activity. Interacts (when phosphorylated at Thr-205) with PIN1, disrupting FBXW7 dimerization and promoting FBXW7 autoubiquitination and degradation. Interacts with UBE2QL1. Interacts with FAM83D; promotes FBXW7 degradation. Interacts with MYCN; FBXW7 competes with AURKA for binding to unphosphorylated MYCN but not for binding to phosphorylated MYCN. Interacts with STOML1. Interacts with NFE2L1. Interacts with USP36, counteracting ubiquitination of MYC. Interacts with NR1D1. Interacts with RICTOR; mediates RICTOR ubiquitination and degradation. Interacts with USP38, counteracting ubiquitination of MYC. In terms of assembly, (Microbial infection) Interacts (via WD repeats) with SV40 large T antigen (via CPD region). Phosphorylation at Thr-205 promotes interaction with PIN1, leading to disrupt FBXW7 dimerization and promoting FBXW7 autoubiquitination and degradation. Phosphorylated by ATM at Ser-26 in response to DNA damage, promoting recruitment to DNA damage sites and 'Lys-63'-linked ubiquitination of phosphorylated XRCC4. Post-translationally, ubiquitinated: autoubiquitinates following phosphorylation at Thr-205 and subsequent interaction with PIN1. Ubiquitination leads to its proteasomal degradation. In terms of tissue distribution, widely expressed. Expressed in brain.

It localises to the nucleus. Its subcellular location is the nucleoplasm. The protein localises to the chromosome. It is found in the cytoplasm. The protein resides in the nucleolus. It functions in the pathway protein modification; protein ubiquitination. Substrate recognition component of a SCF (SKP1-CUL1-F-box protein) E3 ubiquitin-protein ligase complex which mediates the ubiquitination and subsequent proteasomal degradation of target proteins. Recognizes and binds phosphorylated sites/phosphodegrons within target proteins and thereafter brings them to the SCF complex for ubiquitination. Identified substrates include cyclin-E (CCNE1 or CCNE2), DISC1, JUN, MYC, NOTCH1 released notch intracellular domain (NICD), NFE2L1, NOTCH2, MCL1, MLST8, RICTOR, and probably PSEN1. Acts as a negative regulator of JNK signaling by binding to phosphorylated JUN and promoting its ubiquitination and subsequent degradation. Involved in bone homeostasis and negative regulation of osteoclast differentiation. Regulates the amplitude of the cyclic expression of hepatic core clock genes and genes involved in lipid and glucose metabolism via ubiquitination and proteasomal degradation of their transcriptional repressor NR1D1; CDK1-dependent phosphorylation of NR1D1 is necessary for SCF(FBXW7)-mediated ubiquitination. Also able to promote 'Lys-63'-linked ubiquitination in response to DNA damage. The SCF(FBXW7) complex facilitates double-strand break repair following phosphorylation by ATM: phosphorylation promotes localization to sites of double-strand breaks and 'Lys-63'-linked ubiquitination of phosphorylated XRCC4, enhancing DNA non-homologous end joining. The sequence is that of F-box/WD repeat-containing protein 7 from Homo sapiens (Human).